The primary structure comprises 391 residues: Probable protein phosphatase 2C 32 (391 aa).

Residues 1-53 (MSCTVAIPSSPVFSPSRRPLSCKAASASASPESVSVAASSPAQAAPPAGSPLR) form a disordered region. The segment covering 8-51 (PSSPVFSPSRRPLSCKAASASASPESVSVAASSPAQAAPPAGSP) has biased composition (low complexity). The helical transmembrane segment at 95-115 (LVVPVCGGAAAAAAAAAVAAV) threads the bilayer. A PPM-type phosphatase domain is found at 129-386 (EFAVYCRRGK…DDISIVIIQL (258 aa)). The Mn(2+) site is built by Asp-168, Gly-169, Asp-332, and Asp-377.

This sequence belongs to the PP2C family. Mg(2+) is required as a cofactor. It depends on Mn(2+) as a cofactor.

The protein resides in the membrane. It catalyses the reaction O-phospho-L-seryl-[protein] + H2O = L-seryl-[protein] + phosphate. It carries out the reaction O-phospho-L-threonyl-[protein] + H2O = L-threonyl-[protein] + phosphate. The protein is Probable protein phosphatase 2C 32 of Oryza sativa subsp. japonica (Rice).